A 664-amino-acid polypeptide reads, in one-letter code: Transketolase 1 (664 aa).

His-26 contributes to the substrate binding site. Thiamine diphosphate-binding positions include His-66 and 114 to 116 (GPL). Mg(2+) is bound at residue Asp-155. Thiamine diphosphate-binding residues include Gly-156 and Asn-185. Residues Asn-185 and Ile-187 each contribute to the Mg(2+) site. Residues His-260, Arg-357, and Ser-384 each coordinate substrate. His-260 is a binding site for thiamine diphosphate. The active-site Proton donor is the Glu-411. Residue Phe-437 participates in thiamine diphosphate binding. Substrate contacts are provided by His-461, Asp-469, and Arg-520.

Belongs to the transketolase family. As to quaternary structure, homodimer. It depends on Mg(2+) as a cofactor. Ca(2+) serves as cofactor. Mn(2+) is required as a cofactor. The cofactor is Co(2+). Requires thiamine diphosphate as cofactor.

It carries out the reaction D-sedoheptulose 7-phosphate + D-glyceraldehyde 3-phosphate = aldehydo-D-ribose 5-phosphate + D-xylulose 5-phosphate. Functionally, catalyzes the transfer of a two-carbon ketol group from a ketose donor to an aldose acceptor, via a covalent intermediate with the cofactor thiamine pyrophosphate. The protein is Transketolase 1 (tkt1) of Vibrio parahaemolyticus serotype O3:K6 (strain RIMD 2210633).